The primary structure comprises 431 residues: Galanin-like G-protein coupled receptor npr-9 (431 aa).

Residues 1 to 34 are Extracellular-facing; the sequence is MEFENLTKEEMEQLQKIYDDTISFERKIGIIIPT. N-linked (GlcNAc...) asparagine glycosylation occurs at N5. A helical transmembrane segment spans residues 35–55; it reads IFAVIILVGLVGNALVVIVAF. Topologically, residues 56 to 66 are cytoplasmic; it reads GRQMRNSTNTL. A helical membrane pass occupies residues 67 to 87; it reads IIGLAISDLMFLLLCVPFTAV. The Extracellular portion of the chain corresponds to 88–101; the sequence is DYAAPTWIFPEWTC. A disulfide bridge links C101 with C182. A helical transmembrane segment spans residues 102 to 124; it reads SMINFFQHTSAYCSVWTLTLMAL. Topologically, residues 125–143 are cytoplasmic; sequence DRYLAVVYPVESMTLRTPR. The helical transmembrane segment at 144-164 threads the bilayer; that stretch reads NTVIALCFIYIIIIASQIPVG. Over 165–203 the chain is Extracellular; the sequence is RMHGIYVYDFIMEKRSTCAILTIATAEATPTMARTYFMT. Residues 204-224 traverse the membrane as a helical segment; the sequence is FNVFGYVLPLGISVVLYGLML. Residues 225-268 are Cytoplasmic-facing; the sequence is RKLWDMPRPGNSQSVGGRNLTNRDSGSSIRRRPEATAAKRKVTR. Polar residues predominate over residues 235–252; sequence NSQSVGGRNLTNRDSGSS. Positions 235 to 257 are disordered; sequence NSQSVGGRNLTNRDSGSSIRRRP. The chain crosses the membrane as a helical span at residues 269-289; sequence LVLCVLITWALCWLPLNVCFF. The Extracellular portion of the chain corresponds to 290–298; the sequence is MSGLAYPEP. Residues 299-319 traverse the membrane as a helical segment; that stretch reads LVISHGVIMVIVQIASQVLAY. Topologically, residues 320 to 431 are cytoplasmic; sequence TNSCLNPILY…RSKSTRSYNL (112 aa). Polar residues predominate over residues 393–414; it reads SLLKDNSSSATSVQPLRTSIQA. The segment at 393–431 is disordered; the sequence is SLLKDNSSSATSVQPLRTSIQAKKTKNIGRSKSTRSYNL. A compositionally biased stretch (basic residues) spans 415–425; the sequence is KKTKNIGRSKS.

It belongs to the G-protein coupled receptor 1 family. As to expression, exclusively expressed in the AIB interneuron.

Its subcellular location is the cell membrane. Neuropeptide that controls movement such as roaming, foraging and backwards locomotion or 'reversals' in response to environmental cues such as food availability or volatile odorants such as octanol. Antagonizes AIB interneuron activity to control bacterial colonization and may negatively regulate the expression of immunity-related genes such as pqm-1 and dod-22 in response to infection by P.aeruginosa. The polypeptide is Galanin-like G-protein coupled receptor npr-9 (Caenorhabditis elegans).